A 419-amino-acid chain; its full sequence is MKLRAQFDRGTYSESKGSFKLRDSLDPMQPEPSSREGNGLSLTLQPELLARMPGAGSSSGTETGEDVRVPMGSSSGSTNGRGATSRRMRTASHSHSHTHGHGHSHEHESDSGESDLESGESSSSISELRYLLRWLKKSLPFIVILCAKLVIQHALGLAVAVGLFTTFMYVNKSIQTQVFLHDRRTNLHCAWLLLFLTSSSLLVFYTFHTQSLYRCLFFANATIDYHNFWEVLWSVGVTNFILKFIFMGFKCLILLVPCPLMTYRRRGQWYMLIEEVGQLYQVIAPVPLWFRYLVSYDEMDTSVGLTLGILLALLYLIMKLLALYGLSGSLQKTLRTFFSPEVNGAPASPAQIREAGDICPICQADFKQPRVLVCQHIFCEECIAQWLNQERTCPLCRTVITDKVHKWKDGATSAHLQIY.

Residues 1–120 (MKLRAQFDRG…SGESDLESGE (120 aa)) form a disordered region. Composition is skewed to polar residues over residues 31–44 (EPSS…SLTL) and 72–82 (GSSSGSTNGRG). Positions 84 to 102 (TSRRMRTASHSHSHTHGHG) are enriched in basic residues. 6 consecutive transmembrane segments (helical) span residues 141–161 (FIVI…AVAV), 187–207 (LHCA…FYTF), 217–237 (FFAN…SVGV), 240–260 (FILK…PCPL), 270–290 (YMLI…PLWF), and 303–323 (VGLT…LLAL). The segment at 352–403 (IREAGDICPICQADFKQPRVLVCQHIFCEECIAQWLNQERTCPLCRTVITDK) is required for ubiquitin ligase activity and for protection against ER stress-induced cell death. The segment at 359–397 (CPICQADFKQPRVLVCQHIFCEECIAQWLNQERTCPLCR) adopts an RING-type zinc-finger fold.

It is found in the endoplasmic reticulum membrane. It carries out the reaction S-ubiquitinyl-[E2 ubiquitin-conjugating enzyme]-L-cysteine + [acceptor protein]-L-lysine = [E2 ubiquitin-conjugating enzyme]-L-cysteine + N(6)-ubiquitinyl-[acceptor protein]-L-lysine.. It functions in the pathway protein modification; protein ubiquitination. Functionally, E3 ubiquitin-protein ligase that acts in the endoplasmic reticulum (ER)-associated degradation (ERAD) pathway, which targets misfolded proteins that accumulate in the endoplasmic reticulum (ER) for ubiquitination and subsequent proteasome-mediated degradation. Protects cells from ER stress-induced apoptosis. In Danio rerio (Zebrafish), this protein is E3 ubiquitin-protein ligase RNFT1 (rnft1).